A 181-amino-acid chain; its full sequence is Probable cobalt-precorrin-6B C(15)-methyltransferase (decarboxylating) (181 aa).

S-adenosyl-L-methionine contacts are provided by residues Thr-16, 40–44 (GCGSG), Asp-61, and Ala-89.

The protein belongs to the methyltransferase superfamily. Archaeal-type CbiT family.

It catalyses the reaction Co-precorrin-6B + S-adenosyl-L-methionine = Co-precorrin-7 + S-adenosyl-L-homocysteine + CO2. It participates in cofactor biosynthesis; adenosylcobalamin biosynthesis; cob(II)yrinate a,c-diamide from sirohydrochlorin (anaerobic route): step 8/10. In terms of biological role, catalyzes the methylation of C-15 in cobalt-precorrin-6B followed by the decarboxylation of C-12 to form cobalt-precorrin-7. This Methanococcus maripaludis (strain C6 / ATCC BAA-1332) protein is Probable cobalt-precorrin-6B C(15)-methyltransferase (decarboxylating).